The sequence spans 630 residues: A disintegrin and metalloproteinase with thrombospondin motifs 4 (630 aa).

The propeptide occupies 1-5 (RRTKR). The region spanning 11-221 (RFVETLVVAD…GYGHCLLDKP (211 aa)) is the Peptidase M12B domain. Cystine bridges form between C86-C138, C115-C120, C132-C216, C170-C200, C242-C265, C253-C275, C260-C294, C288-C299, C325-C362, C329-C367, and C340-C352. Residue N96 is glycosylated (N-linked (GlcNAc...) asparagine). H154 is a Zn(2+) binding site. E155 is an active-site residue. Zn(2+)-binding residues include H158 and H164. Residues 233 to 303 (GKDYDADRQC…CMGGRCLHVD (71 aa)) enclose the Disintegrin domain. Residues 313–368 (AGGWGPWGPWGDCSRTCGGGVQFSSRDCTKPVPRNGGKYCEGRRTPFRSCNTKNCP) form the TSP type-1 domain. A glycan (N-linked (GlcNAc...) asparagine) is linked at N474. Residues 479-630 (SKQSGSFKKF…LRKRTWAGRK (152 aa)) form a spacer region.

As to quaternary structure, interacts with SRPX2. The cofactor is Zn(2+). Post-translationally, the precursor is cleaved by a furin endopeptidase. Glycosylated. Can be O-fucosylated by POFUT2 on a serine or a threonine residue found within the consensus sequence C1-X(2)-(S/T)-C2-G of the TSP type-1 repeat domains where C1 and C2 are the first and second cysteine residue of the repeat, respectively. Fucosylated repeats can then be further glycosylated by the addition of a beta-1,3-glucose residue by the glucosyltransferase, B3GALTL. Fucosylation mediates the efficient secretion of ADAMTS family members. Can also be C-glycosylated with one or two mannose molecules on tryptophan residues within the consensus sequence W-X-X-W of the TPRs, and N-glycosylated. These other glycosylations can also facilitate secretion. As to expression, brain specific.

Its subcellular location is the secreted. It localises to the extracellular space. It is found in the extracellular matrix. It carries out the reaction Glutamyl endopeptidase. Bonds cleaved include 370-Thr-Glu-Gly-Glu-|-Ala-Arg-Gly-Ser-377 in the interglobular domain of mammalian aggrecan.. Cleaves aggrecan, a cartilage proteoglycan, at the '392-Glu-|-Ala-393' site and may be involved in its turnover. Also cleaves COMP. May play an important role in the destruction of aggrecan in arthritic diseases. The polypeptide is A disintegrin and metalloproteinase with thrombospondin motifs 4 (Adamts4) (Rattus norvegicus (Rat)).